Reading from the N-terminus, the 220-residue chain is Endonuclease NucS (220 aa).

Belongs to the NucS endonuclease family.

It localises to the cytoplasm. Functionally, cleaves both 3' and 5' ssDNA extremities of branched DNA structures. The polypeptide is Endonuclease NucS (Frankia alni (strain DSM 45986 / CECT 9034 / ACN14a)).